A 200-amino-acid polypeptide reads, in one-letter code: Proteasome subunit beta 2 (200 aa).

The propeptide at 1–7 (METKKTG) is removed in mature form; by autocatalysis. The active-site Nucleophile is T8.

This sequence belongs to the peptidase T1B family. In terms of assembly, the 20S proteasome core is composed of 14 alpha and 14 beta subunits that assemble into four stacked heptameric rings, resulting in a barrel-shaped structure. The two inner rings, each composed of seven catalytic beta subunits, are sandwiched by two outer rings, each composed of seven alpha subunits. The catalytic chamber with the active sites is on the inside of the barrel. Has a gated structure, the ends of the cylinder being occluded by the N-termini of the alpha-subunits. Is capped at one or both ends by the proteasome regulatory ATPase, PAN.

It is found in the cytoplasm. It catalyses the reaction Cleavage of peptide bonds with very broad specificity.. The formation of the proteasomal ATPase PAN-20S proteasome complex, via the docking of the C-termini of PAN into the intersubunit pockets in the alpha-rings, triggers opening of the gate for substrate entry. Interconversion between the open-gate and close-gate conformations leads to a dynamic regulation of the 20S proteasome proteolysis activity. Its function is as follows. Component of the proteasome core, a large protease complex with broad specificity involved in protein degradation. The sequence is that of Proteasome subunit beta 2 from Thermococcus onnurineus (strain NA1).